Consider the following 579-residue polypeptide: Protein downstream neighbor of son homolog (579 aa).

2 disordered regions span residues 1-68 (MAEL…RRNP) and 331-379 (FSQP…DESF). Positions 339–348 (DTGKKQKKPE) are enriched in basic and acidic residues. Residues 365–378 (EADEASDESDEDES) are compositionally biased toward acidic residues.

The protein belongs to the DONSON family. Component of the replisome complex.

Its subcellular location is the nucleus. Replisome component that maintains genome stability by protecting stalled or damaged replication forks. After the induction of replication stress, required for the stabilization of stalled replication forks, the efficient activation of the intra-S-phase and G/2M cell-cycle checkpoints and the maintenance of genome stability. In Xenopus laevis (African clawed frog), this protein is Protein downstream neighbor of son homolog.